Consider the following 207-residue polypeptide: Ras-related protein Rab7A (207 aa).

GTP is bound by residues 15 to 22 (GDSGVGKT), 63 to 67 (DTAGQ), and 125 to 128 (NKID). 2 S-geranylgeranyl cysteine lipidation sites follow: C205 and C207. Cysteine methyl ester is present on C207.

Belongs to the small GTPase superfamily. Rab family.

It is found in the cell membrane. In terms of biological role, protein transport. Probably involved in vesicular traffic. This chain is Ras-related protein Rab7A, found in Mesembryanthemum crystallinum (Common ice plant).